Here is a 587-residue protein sequence, read N- to C-terminus: MSSSSSITTTLPLCTNKSLSSSFTTTNSSLLSKPSQLFLHGRRNQSFKVSCNANNVDKNPDAVDRRNVLLGLGGLYGAANLAPLATAAPIPPPDLKSCGTAHVKEGVDVIYSCCPPVPDDIDSVPYYKFPSMTKLRIRPPAHAADEEYVAKYQLATSRMRELDKDPFDPLGFKQQANIHCAYCNGAYKVGGKELQVHFSWLFFPFHRWYLYFYERILGSLINDPTFALPYWNWDHPKGMRIPPMFDREGSSLYDEKRNQNHRNGTIIDLGHFGKEVDTPQLQIMTNNLTLMYRQMVTNAPCPSQFFGAAYPLGSEPSPGQGTIENIPHTPVHIWTGDKPRQKNGEDMGNFYSAGLDPIFYCHHANVDRMWNEWKLIGGKRRDLTDKDWLNSEFFFYDENRNPYRVKVRDCLDSKKMGFDYAPMPTPWRNFKPIRKSSSGKVNTASIAPVSKVFPLAKLDRAISFSITRPASSRTTQEKNEQEEILTFNKISYDDRNYVRFDVFLNVDKTVNADELDKAEFAGSYTSLPHVHGSNTNHVTSLTFKLAITELLEDIGLEDEDTIAVTLVPKAGGEEVSIESVEIKLEDC.

Residues 1-87 (MSSSSSITTT…AANLAPLATA (87 aa)) constitute a chloroplast transit peptide. Disulfide bonds link C98/C114 and C113/C180. Cu cation contacts are provided by H179, H197, H206, H328, H332, and H363. Positions 183-197 (CNGAYKVGGKELQVH) form a cross-link, 2'-(S-cysteinyl)-histidine (Cys-His).

Belongs to the tyrosinase family. Cu(2+) serves as cofactor.

It is found in the plastid. It localises to the chloroplast thylakoid lumen. It carries out the reaction 2 catechol + O2 = 2 1,2-benzoquinone + 2 H2O. Catalyzes the oxidation of mono- and o-diphenols to o-diquinones. This is Polyphenol oxidase E, chloroplastic from Solanum lycopersicum (Tomato).